A 189-amino-acid chain; its full sequence is ComE operon protein 2 (189 aa).

The 128-residue stretch at 5 to 132 (SWNQYFMAQS…PYAQELFEQA (128 aa)) folds into the CMP/dCMP-type deaminase domain. His70 serves as a coordination point for Zn(2+). Glu72 serves as the catalytic Proton donor. Zn(2+)-binding residues include Cys98 and Cys101.

It belongs to the cytidine and deoxycytidylate deaminase family. Zn(2+) is required as a cofactor.

Dispensable for transformability. The polypeptide is ComE operon protein 2 (comEB) (Bacillus subtilis (strain 168)).